The primary structure comprises 883 residues: Alanine--tRNA ligase (883 aa).

H563, H567, C673, and H677 together coordinate Zn(2+).

Belongs to the class-II aminoacyl-tRNA synthetase family. It depends on Zn(2+) as a cofactor.

Its subcellular location is the cytoplasm. It catalyses the reaction tRNA(Ala) + L-alanine + ATP = L-alanyl-tRNA(Ala) + AMP + diphosphate. In terms of biological role, catalyzes the attachment of alanine to tRNA(Ala) in a two-step reaction: alanine is first activated by ATP to form Ala-AMP and then transferred to the acceptor end of tRNA(Ala). Also edits incorrectly charged Ser-tRNA(Ala) and Gly-tRNA(Ala) via its editing domain. The chain is Alanine--tRNA ligase from Caulobacter sp. (strain K31).